Consider the following 224-residue polypeptide: Phosphoribosylformylglycinamidine synthase subunit PurQ (224 aa).

Positions 4-224 (RIGVITFPGT…YSALDSVLAS (221 aa)) constitute a Glutamine amidotransferase type-1 domain. C87 serves as the catalytic Nucleophile. Residues H195 and E197 contribute to the active site.

As to quaternary structure, part of the FGAM synthase complex composed of 1 PurL, 1 PurQ and 2 PurS subunits.

Its subcellular location is the cytoplasm. It carries out the reaction N(2)-formyl-N(1)-(5-phospho-beta-D-ribosyl)glycinamide + L-glutamine + ATP + H2O = 2-formamido-N(1)-(5-O-phospho-beta-D-ribosyl)acetamidine + L-glutamate + ADP + phosphate + H(+). The catalysed reaction is L-glutamine + H2O = L-glutamate + NH4(+). It functions in the pathway purine metabolism; IMP biosynthesis via de novo pathway; 5-amino-1-(5-phospho-D-ribosyl)imidazole from N(2)-formyl-N(1)-(5-phospho-D-ribosyl)glycinamide: step 1/2. Part of the phosphoribosylformylglycinamidine synthase complex involved in the purines biosynthetic pathway. Catalyzes the ATP-dependent conversion of formylglycinamide ribonucleotide (FGAR) and glutamine to yield formylglycinamidine ribonucleotide (FGAM) and glutamate. The FGAM synthase complex is composed of three subunits. PurQ produces an ammonia molecule by converting glutamine to glutamate. PurL transfers the ammonia molecule to FGAR to form FGAM in an ATP-dependent manner. PurS interacts with PurQ and PurL and is thought to assist in the transfer of the ammonia molecule from PurQ to PurL. This Mycobacterium leprae (strain TN) protein is Phosphoribosylformylglycinamidine synthase subunit PurQ.